Reading from the N-terminus, the 493-residue chain is Lysine--tRNA ligase (493 aa).

Mg(2+) is bound by residues Glu-402 and Glu-409.

This sequence belongs to the class-II aminoacyl-tRNA synthetase family. Homodimer. Mg(2+) serves as cofactor.

It localises to the cytoplasm. The enzyme catalyses tRNA(Lys) + L-lysine + ATP = L-lysyl-tRNA(Lys) + AMP + diphosphate. This is Lysine--tRNA ligase from Ureaplasma parvum serovar 3 (strain ATCC 27815 / 27 / NCTC 11736).